We begin with the raw amino-acid sequence, 441 residues long: Maltose-6'-phosphate glucosidase MalH (441 aa).

F4–N70 is an NAD(+) binding site. 2 residues coordinate substrate: R93 and N147. Position 169 (C169) interacts with Mn(2+). Residue D170 is the Proton donor of the active site. H200 is a binding site for Mn(2+). The active-site Proton acceptor is the Y264. Residue R284 coordinates substrate.

In terms of assembly, homotetramer. Requires NAD(+) as cofactor. Mn(2+) serves as cofactor.

It catalyses the reaction alpha-maltose 6'-phosphate + H2O = D-glucose 6-phosphate + D-glucose. Catalyzes the hydrolysis of O-alpha-linked disaccharide 6-phosphates, including maltose-6'P and all five phosphorylated isomers of sucrose, but not sucrose-6P. Does not hydrolyze beta-linked disaccharide 6-phosphates such as cellobiose-6'P and gentiobiose-6'P. Is involved in the dissimilation of maltose and related O-alpha-linked glucosides produced via the phosphoenolpyruvate-dependent sugar phosphotransferase system (PEP-PTS). The sequence is that of Maltose-6'-phosphate glucosidase MalH (malH) from Clostridium acetobutylicum (strain ATCC 824 / DSM 792 / JCM 1419 / IAM 19013 / LMG 5710 / NBRC 13948 / NRRL B-527 / VKM B-1787 / 2291 / W).